A 471-amino-acid chain; its full sequence is Tetratricopeptide repeat protein 29 (471 aa).

TPR repeat units follow at residues Asp92–Glu131, Tyr136–Ile173, Ala182–Arg215, Val234–Gly267, Gly274–Leu307, Gly314–Asn347, and Ile354–Val387.

It is found in the cytoplasm. The protein resides in the cytoskeleton. The protein localises to the flagellum axoneme. In terms of biological role, axonemal protein which is implicated in axonemal and/or peri-axonemal structure assembly and regulates flagellum assembly and beating and therefore sperm motility. This is Tetratricopeptide repeat protein 29 (Ttc29) from Rattus norvegicus (Rat).